Consider the following 359-residue polypeptide: MTSTLFFKPRPSSTLAEIAALTKAELIDPSQGDRVITGIASLDEAGPMHLGFFENLNYVAELEQTCAGACLVTQRHESRVPSHVAVLRVKSPVRAFVTYARHIHEDAMRPMSGFRSVGIAPSAVIHATARLEDGVIVDPLAVIGPEVEIGAGSVIGAGSVIASGVKIGRDCNVGANTTIQFALIGNNVLIHPGCHIGQDGFRFIFAQTHQKVPQVGRVIIQNDVEIGSGTTVDRGGLRDTVIGEGTKIDNQVQVGHNVTIGRHCVIAAQCGLAGSLTLGDNVALGAKVGVNNHVTIGDGAQITAMSAVKDSVPAGERWGGFFAKPTKQWFREIIAVERLLRSGAGAAPKSDDGKDGERG.

H256 (proton acceptor) is an active-site residue.

This sequence belongs to the transferase hexapeptide repeat family. LpxD subfamily. As to quaternary structure, homotrimer.

It catalyses the reaction a UDP-3-O-[(3R)-3-hydroxyacyl]-alpha-D-glucosamine + a (3R)-hydroxyacyl-[ACP] = a UDP-2-N,3-O-bis[(3R)-3-hydroxyacyl]-alpha-D-glucosamine + holo-[ACP] + H(+). It participates in bacterial outer membrane biogenesis; LPS lipid A biosynthesis. In terms of biological role, catalyzes the N-acylation of UDP-3-O-acylglucosamine using 3-hydroxyacyl-ACP as the acyl donor. Is involved in the biosynthesis of lipid A, a phosphorylated glycolipid that anchors the lipopolysaccharide to the outer membrane of the cell. In Rhodopseudomonas palustris (strain BisB5), this protein is UDP-3-O-acylglucosamine N-acyltransferase.